A 289-amino-acid polypeptide reads, in one-letter code: Epoxyqueuosine reductase (289 aa).

Aspartate 111 serves as the catalytic Proton donor. A 4Fe-4S ferredoxin-type domain is found at 156–185 (QGDRPHSQHCGTCTRCLEACPTQAIVEPFV). Cysteine 165, cysteine 168, cysteine 171, cysteine 175, cysteine 191, cysteine 219, cysteine 222, and cysteine 226 together coordinate [4Fe-4S] cluster.

The protein belongs to the QueG family. In terms of assembly, monomer. The cofactor is cob(II)alamin. [4Fe-4S] cluster is required as a cofactor.

Its subcellular location is the cytoplasm. It carries out the reaction epoxyqueuosine(34) in tRNA + AH2 = queuosine(34) in tRNA + A + H2O. It functions in the pathway tRNA modification; tRNA-queuosine biosynthesis. Functionally, catalyzes the conversion of epoxyqueuosine (oQ) to queuosine (Q), which is a hypermodified base found in the wobble positions of tRNA(Asp), tRNA(Asn), tRNA(His) and tRNA(Tyr). In Synechocystis sp. (strain ATCC 27184 / PCC 6803 / Kazusa), this protein is Epoxyqueuosine reductase.